The following is a 346-amino-acid chain: Inositol 2-dehydrogenase/D-chiro-inositol 3-dehydrogenase (346 aa).

Basic and acidic residues predominate over residues 322-331 (GREESIELPK). The segment at 322 to 346 (GREESIELPKKPAFYQHSAATPEQV) is disordered.

Belongs to the Gfo/Idh/MocA family. Homotetramer.

It carries out the reaction myo-inositol + NAD(+) = scyllo-inosose + NADH + H(+). The enzyme catalyses 1D-chiro-inositol + NAD(+) = scyllo-inosine + NADH + H(+). It participates in polyol metabolism; myo-inositol degradation into acetyl-CoA; acetyl-CoA from myo-inositol: step 1/7. Functionally, involved in the oxidation of myo-inositol (MI) and D-chiro-inositol (DCI) to 2-keto-myo-inositol (2KMI or 2-inosose) and 1-keto-D-chiro-inositol (1KDCI), respectively. The polypeptide is Inositol 2-dehydrogenase/D-chiro-inositol 3-dehydrogenase (Shouchella clausii (strain KSM-K16) (Alkalihalobacillus clausii)).